The following is a 205-amino-acid chain: Thymidine kinase (205 aa).

ATP contacts are provided by residues 9–16 (SAMNAGKT) and 88–91 (DECH). Glu-89 acts as the Proton acceptor in catalysis. Residues Cys-146, Cys-148, Cys-183, and His-186 each contribute to the Zn(2+) site.

It belongs to the thymidine kinase family. As to quaternary structure, homotetramer.

The protein localises to the cytoplasm. The enzyme catalyses thymidine + ATP = dTMP + ADP + H(+). This is Thymidine kinase from Blochmanniella pennsylvanica (strain BPEN).